A 253-amino-acid polypeptide reads, in one-letter code: 5'/3'-nucleotidase SurE (253 aa).

Residues Asp8, Asp9, Ser39, and Asn92 each coordinate a divalent metal cation.

The protein belongs to the SurE nucleotidase family. It depends on a divalent metal cation as a cofactor.

It localises to the cytoplasm. The catalysed reaction is a ribonucleoside 5'-phosphate + H2O = a ribonucleoside + phosphate. It catalyses the reaction a ribonucleoside 3'-phosphate + H2O = a ribonucleoside + phosphate. The enzyme catalyses [phosphate](n) + H2O = [phosphate](n-1) + phosphate + H(+). Nucleotidase with a broad substrate specificity as it can dephosphorylate various ribo- and deoxyribonucleoside 5'-monophosphates and ribonucleoside 3'-monophosphates with highest affinity to 3'-AMP. Also hydrolyzes polyphosphate (exopolyphosphatase activity) with the preference for short-chain-length substrates (P20-25). Might be involved in the regulation of dNTP and NTP pools, and in the turnover of 3'-mononucleotides produced by numerous intracellular RNases (T1, T2, and F) during the degradation of various RNAs. In Klebsiella pneumoniae (strain 342), this protein is 5'/3'-nucleotidase SurE.